Here is a 291-residue protein sequence, read N- to C-terminus: Farnesyl diphosphate synthase (291 aa).

Residues Lys44, Arg47, and His76 each contribute to the isopentenyl diphosphate site. Mg(2+) is bound by residues Asp83 and Asp89. A (2E)-geranyl diphosphate-binding site is contributed by Arg94. Arg95 is an isopentenyl diphosphate binding site. Residues Lys177, Thr178, Gln215, and Lys232 each coordinate (2E)-geranyl diphosphate.

This sequence belongs to the FPP/GGPP synthase family. It depends on Mg(2+) as a cofactor.

The protein resides in the cytoplasm. It catalyses the reaction isopentenyl diphosphate + (2E)-geranyl diphosphate = (2E,6E)-farnesyl diphosphate + diphosphate. The protein is Farnesyl diphosphate synthase (fps) of Micrococcus luteus (Micrococcus lysodeikticus).